The primary structure comprises 155 residues: Putative pre-16S rRNA nuclease (155 aa).

This sequence belongs to the YqgF nuclease family.

The protein resides in the cytoplasm. Could be a nuclease involved in processing of the 5'-end of pre-16S rRNA. The polypeptide is Putative pre-16S rRNA nuclease (Wolbachia pipientis wMel).